Reading from the N-terminus, the 63-residue chain is Cypmaclein (63 aa).

The protein belongs to the GASA family. In terms of tissue distribution, expressed in pollen (at protein level).

The protein is Cypmaclein of Cryptomeria japonica (Japanese cedar).